The chain runs to 432 residues: RNA binding protein fox-1 homolog 2 (432 aa).

Over residues 1–21 (MAEGGQAQQQPPQLGPGAAAR) the composition is skewed to low complexity. Positions 1–169 (MAEGGQAQQQ…STPKRLHVSN (169 aa)) are disordered. Composition is skewed to polar residues over residues 60 to 69 (QGNQEPTTTP) and 101 to 121 (YAGQ…PHGE). Low complexity predominate over residues 122 to 159 (QSSNSPSNQNGSLTQTEGGAQTDGQQSQTQSSENSESK). Residues 163–239 (KRLHVSNIPF…RKIEVNNATA (77 aa)) enclose the RRM domain. Omega-N-methylarginine is present on R323. Residues R339 and R371 each carry the asymmetric dimethylarginine modification. Asymmetric dimethylarginine; alternate is present on residues R423 and R428. R423 and R428 each carry omega-N-methylarginine; alternate.

Interacts with ER-alpha N-terminal activation domain. Interacts with RBPMS; the interaction allows cooperative assembly of stable cell-specific alternative splicing regulatory complexes.

It is found in the nucleus. Its subcellular location is the cytoplasm. RNA-binding protein that regulates alternative splicing events by binding to 5'-UGCAUGU-3' elements. Prevents binding of U2AF2 to the 3'-splice site. Regulates alternative splicing of tissue-specific exons and of differentially spliced exons during erythropoiesis. Seems to act as a coregulatory factor of ER-alpha. Together with RNA binding proteins RBPMS and MBNL1/2, activates vascular smooth muscle cells alternative splicing events. The chain is RNA binding protein fox-1 homolog 2 (Rbfox2) from Rattus norvegicus (Rat).